A 125-amino-acid polypeptide reads, in one-letter code: Fluoride-specific ion channel FluC (125 aa).

Transmembrane regions (helical) follow at residues proline 4–valine 24, glycine 36–alanine 56, leucine 68–valine 88, and valine 100–leucine 120. The Na(+) site is built by glycine 75 and threonine 78.

It belongs to the fluoride channel Fluc/FEX (TC 1.A.43) family.

The protein resides in the cell inner membrane. It carries out the reaction fluoride(in) = fluoride(out). Its activity is regulated as follows. Na(+) is not transported, but it plays an essential structural role and its presence is essential for fluoride channel function. Its function is as follows. Fluoride-specific ion channel. Important for reducing fluoride concentration in the cell, thus reducing its toxicity. This is Fluoride-specific ion channel FluC from Erwinia tasmaniensis (strain DSM 17950 / CFBP 7177 / CIP 109463 / NCPPB 4357 / Et1/99).